A 1040-amino-acid polypeptide reads, in one-letter code: Protocadherin-10 (1040 aa).

A signal peptide spans 1–18 (MIVLLLFALLWMVEGVFS). 6 consecutive Cadherin domains span residues 19–122 (QLHY…PPSF), 123–250 (PEPD…VPAF), 251–358 (DQPV…APEI), 359–463 (SFST…APRF), 464–574 (SQPV…APAI), and 582–690 (NGTP…GGGG). Over 19-715 (QLHYTVQEEQ…GGGETSLDLT (697 aa)) the chain is Extracellular. Over residues 207-223 (GGGGGVGEGGGGGGGAG) the composition is skewed to gly residues. The disordered stretch occupies residues 207–228 (GGGGGVGEGGGGGGGAGLPPQQ). N-linked (GlcNAc...) asparagine glycosylation is present at asparagine 273. N-linked (GlcNAc...) asparagine glycosylation occurs at asparagine 557. Positions 686 to 697 (QGGGGSGGGGSG) are enriched in gly residues. Residues 686-708 (QGGGGSGGGGSGEHQRPSRSGGG) are disordered. A helical membrane pass occupies residues 716-736 (LILIIALGSVSFIFLLAMIVL). At 737-1040 (AVRCQKEKKL…PPYLTRKRIC (304 aa)) the chain is on the cytoplasmic side. The tract at residues 899 to 927 (AFQEADIVSSKDSGHGDSEQGDSDHDATN) is disordered. Basic and acidic residues predominate over residues 910–926 (DSGHGDSEQGDSDHDAT).

Moderately expressed in all regions of the brain examined, as well as in testis and ovary, and low expression in all other tissues tested.

Its subcellular location is the cell membrane. Potential calcium-dependent cell-adhesion protein. In terms of biological role, (Microbial infection) Acts as a receptor for Western equine encephalitis virus. This chain is Protocadherin-10 (PCDH10), found in Homo sapiens (Human).